Here is a 168-residue protein sequence, read N- to C-terminus: Cilia- and flagella-associated protein 276 (168 aa).

2 disordered regions span residues 35–61 and 149–168; these read AHLA…RDTF and HTAA…FFST. Residues 38 to 55 show a composition bias toward polar residues; the sequence is AQQQDPWSRLSSTPTATS.

In terms of assembly, microtubule inner protein component of sperm flagellar doublet microtubules. As to expression, predominantly expressed in nervous system tissues, such as the spinal cord, cerebrum, cerebellum, and sciatic nerve.

It is found in the cytoplasm. It localises to the cytoskeleton. The protein resides in the cilium axoneme. Its subcellular location is the flagellum axoneme. Microtubule inner protein (MIP) part of the dynein-decorated doublet microtubules (DMTs) in cilia axoneme, which is required for motile cilia beating. May play an important role for the maintenance of myelin-axon integrity. May affect intracellular Ca(2+) homeostasis. The chain is Cilia- and flagella-associated protein 276 from Mus musculus (Mouse).